The following is a 189-amino-acid chain: Interferon alpha-17 (189 aa).

A signal peptide spans 1–23 (MALSFSLLMAVLVLSYKSICSLG). Cystine bridges form between C24/C122 and C52/C162.

Belongs to the alpha/beta interferon family.

It localises to the secreted. Produced by macrophages, IFN-alpha have antiviral activities. Interferon stimulates the production of two enzymes: a protein kinase and an oligoadenylate synthetase. The sequence is that of Interferon alpha-17 (IFNA17) from Homo sapiens (Human).